The following is a 1957-amino-acid chain: Sporulation-specific protein 15 (1957 aa).

Composition is skewed to low complexity over residues 1–12 (MSNQSSSGSNTS) and 19–28 (ASSLVSSAAS). Positions 1-102 (MSNQSSSGSN…STASSALPLT (102 aa)) are disordered. The segment covering 58 to 83 (SQHEDSSEELKRQEVRGMRRHSDLSI) has biased composition (basic and acidic residues). A compositionally biased stretch (polar residues) spans 90 to 102 (SEGSTASSALPLT). Ser-105 carries the post-translational modification Phosphoserine. Coiled coils occupy residues 199 to 785 (KQSE…FTSL), 804 to 1235 (VNMQ…DLLD), 1320 to 1471 (KVVA…SLDD), and 1481 to 1723 (EKLG…EQHE).

It belongs to the MPC70 family. In terms of assembly, monomer.

It localises to the cytoplasm. Its subcellular location is the cytoskeleton. The protein resides in the microtubule organizing center. The protein localises to the spindle pole body. In terms of biological role, has a role in the initiation of spore membrane formation. This Schizosaccharomyces pombe (strain 972 / ATCC 24843) (Fission yeast) protein is Sporulation-specific protein 15 (spo15).